Consider the following 92-residue polypeptide: UPF0250 protein PD_0532 (92 aa).

It belongs to the UPF0250 family.

The protein is UPF0250 protein PD_0532 of Xylella fastidiosa (strain Temecula1 / ATCC 700964).